The following is a 662-amino-acid chain: Putative cysteine-rich receptor-like protein kinase 16 (662 aa).

The first 26 residues, 1-26, serve as a signal peptide directing secretion; the sequence is MIFIMKLKNLLPIFCFFLVSFSISSA. 2 consecutive Gnk2-homologous domains span residues 27–131 and 137–244; these read QKCG…NRSF and MTPF…LYQF. At 27 to 277 the chain is on the extracellular side; the sequence is QKCGKTGLFK…DDGGKISTRN (251 aa). N-linked (GlcNAc...) asparagine glycans are attached at residues asparagine 55, asparagine 64, asparagine 106, asparagine 128, asparagine 145, asparagine 152, and asparagine 206. A helical transmembrane segment spans residues 278–298; that stretch reads ILGITVALAFFITVLLVLGYA. Over 299-662 the chain is Cytoplasmic; it reads LSRRRKAYQE…DASITSVDLR (364 aa). Positions 335 to 612 constitute a Protein kinase domain; it reads FQKSNKLGHG…VFQMLTNTFL (278 aa). Residues 341–349 and lysine 363 contribute to the ATP site; that span reads LGHGGFGEV. The active-site Proton acceptor is aspartate 460.

It belongs to the protein kinase superfamily. Ser/Thr protein kinase family. CRK subfamily.

It localises to the membrane. It carries out the reaction L-seryl-[protein] + ATP = O-phospho-L-seryl-[protein] + ADP + H(+). It catalyses the reaction L-threonyl-[protein] + ATP = O-phospho-L-threonyl-[protein] + ADP + H(+). The protein is Putative cysteine-rich receptor-like protein kinase 16 (CRK16) of Arabidopsis thaliana (Mouse-ear cress).